A 293-amino-acid polypeptide reads, in one-letter code: Protein BOBBER 2 (293 aa).

Residue Ala2 is modified to N-acetylalanine. The stretch at 50–80 (EKEIVAAVMAAKQRLREAEKKKLEKESVKSM) forms a coiled coil. Composition is skewed to basic and acidic residues over residues 67–102 (AEKKKLEKESVKSMEVEKPKKDSLKPTELEKPKEES) and 110–120 (EIEKPKEEKES). The disordered stretch occupies residues 67 to 125 (AEKKKLEKESVKSMEVEKPKKDSLKPTELEKPKEESLMATDPMEIEKPKEEKESGPIVP). In terms of domain architecture, CS spans 131-220 (LDFEKYSWGQ…DQMEWWKYCV (90 aa)).

The protein resides in the cytoplasm. It is found in the cytoplasmic granule. Functionally, small heat shock protein required for the establishment of auxin gradients and for patterning of the apical domain of the embryo. Involved in the specification of the cotyledon primordia. Also required for normal inflorescence and floral meristem function, normal developmental patterning and thermotolerance. Acts as a molecular chaperone. In Arabidopsis thaliana (Mouse-ear cress), this protein is Protein BOBBER 2 (BOB2).